The chain runs to 60 residues: MARLKVTQVRSEIGTKQNQRDSLRSLGLKRINDVVVKEDRPEIRGMIFTVNHLVKVEEVE.

The protein belongs to the universal ribosomal protein uL30 family. As to quaternary structure, part of the 50S ribosomal subunit.

The protein is Large ribosomal subunit protein uL30 of Salinispora tropica (strain ATCC BAA-916 / DSM 44818 / JCM 13857 / NBRC 105044 / CNB-440).